Here is a 180-residue protein sequence, read N- to C-terminus: Large ribosomal subunit protein bL19 (180 aa).

This sequence belongs to the bacterial ribosomal protein bL19 family.

This protein is located at the 30S-50S ribosomal subunit interface and may play a role in the structure and function of the aminoacyl-tRNA binding site. This chain is Large ribosomal subunit protein bL19, found in Allorhizobium ampelinum (strain ATCC BAA-846 / DSM 112012 / S4) (Agrobacterium vitis (strain S4)).